The chain runs to 180 residues: DNA-directed RNA polymerase subunit Rpo7 (180 aa).

The S1 motif domain occupies 82–165 (QEVVEGEVLQ…RLPRIALTMR (84 aa)).

This sequence belongs to the eukaryotic RPB7/RPC8 RNA polymerase subunit family. Part of the 13-subunit RNA polymerase complex. Forms a stalk with Rpo4 that extends from the main structure.

The protein resides in the cytoplasm. The catalysed reaction is RNA(n) + a ribonucleoside 5'-triphosphate = RNA(n+1) + diphosphate. DNA-dependent RNA polymerase (RNAP) catalyzes the transcription of DNA into RNA using the four ribonucleoside triphosphates as substrates. The highly mobile Rpo4/Rpo7 heterodimer is conditionally required for transcription initiation. In Saccharolobus shibatae (strain ATCC 51178 / DSM 5389 / JCM 8931 / NBRC 15437 / B12) (Sulfolobus shibatae), this protein is DNA-directed RNA polymerase subunit Rpo7.